The sequence spans 422 residues: Exodeoxyribonuclease 7 large subunit (422 aa).

The protein belongs to the XseA family. In terms of assembly, heterooligomer composed of large and small subunits.

Its subcellular location is the cytoplasm. The catalysed reaction is Exonucleolytic cleavage in either 5'- to 3'- or 3'- to 5'-direction to yield nucleoside 5'-phosphates.. Functionally, bidirectionally degrades single-stranded DNA into large acid-insoluble oligonucleotides, which are then degraded further into small acid-soluble oligonucleotides. The sequence is that of Exodeoxyribonuclease 7 large subunit from Leptospira interrogans serogroup Icterohaemorrhagiae serovar copenhageni (strain Fiocruz L1-130).